Reading from the N-terminus, the 502-residue chain is ATP synthase subunit alpha (502 aa).

169 to 176 (GDRQTGKT) lines the ATP pocket.

Belongs to the ATPase alpha/beta chains family. In terms of assembly, F-type ATPases have 2 components, CF(1) - the catalytic core - and CF(0) - the membrane proton channel. CF(1) has five subunits: alpha(3), beta(3), gamma(1), delta(1), epsilon(1). CF(0) has three main subunits: a(1), b(2) and c(9-12). The alpha and beta chains form an alternating ring which encloses part of the gamma chain. CF(1) is attached to CF(0) by a central stalk formed by the gamma and epsilon chains, while a peripheral stalk is formed by the delta and b chains.

The protein resides in the cell inner membrane. It catalyses the reaction ATP + H2O + 4 H(+)(in) = ADP + phosphate + 5 H(+)(out). Its function is as follows. Produces ATP from ADP in the presence of a proton gradient across the membrane. The alpha chain is a regulatory subunit. The protein is ATP synthase subunit alpha of Thermodesulfovibrio yellowstonii (strain ATCC 51303 / DSM 11347 / YP87).